Consider the following 612-residue polypeptide: FAD-linked oxidoreductase easE (612 aa).

The FAD-binding PCMH-type domain occupies 129–313 (HQGRIPLYSA…TRATMRVFPD (185 aa)).

The protein belongs to the oxygen-dependent FAD-linked oxidoreductase family. Requires FAD as cofactor.

The protein operates within alkaloid biosynthesis; ergot alkaloid biosynthesis. In terms of biological role, FAD-linked oxidoreductase; part of the gene cluster that mediates the biosynthesis of fungal ergot alkaloid. DmaW catalyzes the first step of ergot alkaloid biosynthesis by condensing dimethylallyl diphosphate (DMAP) and tryptophan to form 4-dimethylallyl-L-tryptophan. The second step is catalyzed by the methyltransferase easF that methylates 4-dimethylallyl-L-tryptophan in the presence of S-adenosyl-L-methionine, resulting in the formation of 4-dimethylallyl-L-abrine. The catalase easC and the FAD-dependent oxidoreductase easE then transform 4-dimethylallyl-L-abrine to chanoclavine-I which is further oxidized by easD in the presence of NAD(+), resulting in the formation of chanoclavine-I aldehyde. Chanoclavine-I aldehyde is the precursor of ergoamides and ergopeptines in Clavicipitaceae, and clavine-type alcaloids such as fumiclavine in Trichocomaceae. However, the metabolites downstream of chanoclavine-I aldehyde in Arthrodermataceae have not been identified yet. The polypeptide is FAD-linked oxidoreductase easE (Arthroderma otae (strain ATCC MYA-4605 / CBS 113480) (Microsporum canis)).